Here is a 279-residue protein sequence, read N- to C-terminus: NH(3)-dependent NAD(+) synthetase (279 aa).

46-53 (GISGGQDS) contacts ATP. Residue D52 coordinates Mg(2+). R145 provides a ligand contact to deamido-NAD(+). ATP is bound at residue T165. E170 lines the Mg(2+) pocket. The deamido-NAD(+) site is built by K178 and D185. Residues K194 and T216 each coordinate ATP. Residue 265–266 (HK) coordinates deamido-NAD(+).

This sequence belongs to the NAD synthetase family. As to quaternary structure, homodimer.

It catalyses the reaction deamido-NAD(+) + NH4(+) + ATP = AMP + diphosphate + NAD(+) + H(+). It functions in the pathway cofactor biosynthesis; NAD(+) biosynthesis; NAD(+) from deamido-NAD(+) (ammonia route): step 1/1. Catalyzes the ATP-dependent amidation of deamido-NAD to form NAD. Uses ammonia as a nitrogen source. The protein is NH(3)-dependent NAD(+) synthetase of Rhodococcus jostii (strain RHA1).